The following is a 35-amino-acid chain: Beta/omega-theraphotoxin-Bp1a (35 aa).

Cystine bridges form between Cys2–Cys16, Cys9–Cys21, and Cys15–Cys28.

The protein belongs to the neurotoxin 10 (Hwtx-1) family. 54 (ProTx-1) subfamily. Post-translationally, an unnatural amidation at Ser-35 provokes a 14-fold increased toxin ability to inhibit Nav1.2/SCN2A and a ~2-fold decreased toxin ability to inhibit both Nav1.5/SCN5A and Nav1.7/SCN9A. As to expression, expressed by the venom gland.

The protein resides in the secreted. Its function is as follows. Ion channel impairing toxin that inhibits voltage-gated calcium channel Cav3.1/CACNA1G (IC(50)=53 nM), voltage-gated potassium channels Kv2.1/KCNB1 (IC(50)=411 nM), all sodium channels tested (Nav1.2/SCN2A (IC(50)=60-104 nM), Nav1.5/SCN5A (IC(50)=76-358 nM), Nav1.6/SCN8A (IC(50)=21-133 nM), Nav1.7/SCN9A (IC(50)=51-95 nM), and Nav1.8/SCN10A) as well as the nociceptor cation channel TRPA1 (IC(50)=389 nM). Acts as a potent and selective blocker of voltage-gated calcium channel Cav3.1/CACNA1G, but not of Cav3.2/CACNA1H, and Cav3.3/CACNA1I. On Nav1.7/SCN9A, primarily interacts with the DII and DIV voltage-sensor domains. Also acts as an inhibitor of nociceptor cation channel TRPA1 (IC(50)~389 nM) by binding to the S1-S4 gating domain of TRPA1. It shows moderate affinity for lipid bilayers. The polypeptide is Beta/omega-theraphotoxin-Bp1a (Bumba pulcherrimaklaasi (Tarantula spider)).